We begin with the raw amino-acid sequence, 288 residues long: Glucose-1-phosphate thymidylyltransferase (288 aa).

Gly-8 contacts dTDP-alpha-D-glucose. 9 residues coordinate dTTP: Gly-8, Gly-11, Thr-12, Arg-13, Lys-23, Gln-24, Gln-80, Gly-85, and Asp-108. Positions 23, 24, 80, 85, 108, 109, 143, 158, 159, 169, and 222 each coordinate dTDP-alpha-D-glucose. Residue Asp-108 coordinates Mg(2+). Asp-222 contacts Mg(2+).

This sequence belongs to the glucose-1-phosphate thymidylyltransferase family. It depends on Mg(2+) as a cofactor.

It carries out the reaction dTTP + alpha-D-glucose 1-phosphate + H(+) = dTDP-alpha-D-glucose + diphosphate. Its pathway is carbohydrate biosynthesis; dTDP-L-rhamnose biosynthesis. In terms of biological role, catalyzes the conversion of glucose-1-phosphate and dTTP to dTDP-glucose and pyrophosphate. Involved in the biosynthesis of the dTDP-L-rhamnose which is a component of the critical linker, D-N-acetylglucosamine-L-rhamnose disaccharide, which connects the galactan region of arabinogalactan to peptidoglycan via a phosphodiester linkage. The protein is Glucose-1-phosphate thymidylyltransferase (rmlA) of Mycobacterium tuberculosis (strain CDC 1551 / Oshkosh).